A 579-amino-acid chain; its full sequence is MGQAEFNARTDASAEISAFAVRAEPDSEPVSEKQGTAETDAETGAGGTEVPAERNGEDDVERTPKKSLSFKLAFIGLAASMFVFQVDATALGIALPTIAADLKGESLESFWANLSYTLCGLVMQPVWASISTAFGRKPPLYVSMALFFIGSIVFAVAQNMNTIIVGRVLQGFGGGGIDVLAEVILADMTTLEERSKYLGLMAIPMAIGNIMGPSVGALFATYASWRWIGWVNLPLLGIGTPLVFFFLKLRPVPLDASLAKNLNRLDWIGMVLVVVGITIFVLPLSWAGSLFPWGAWQTLVPLFLGVAVLVIFAFYEARPDAPIVPHRLFHSKTGNMTLVGGFLHGAVLVSLLQYLPLIYQAVQLETAILSAVSLLPTVIISVVVAAISMMLVPWFGGYVWILRLAWVILTLGTGLLALFDVGSSSSMRLGLPILWGAGVALLRLNLLPMQASVKNVDDTGLAIGQFLTIRMFGGLVGLTISATIFNSVFSTSISATAVHLTGPLAPLKDVANAVAFIDKLRSIDVPVETRDQVLRVYLKCFQTIFYTMTGLSGLGLVTSLFVDEIDLKSQGLGNQRFEE.

The disordered stretch occupies residues 17–62 (SAFAVRAEPDSEPVSEKQGTAETDAETGAGGTEVPAERNGEDDVER). Residues 51 to 62 (PAERNGEDDVER) are compositionally biased toward basic and acidic residues. The next 8 membrane-spanning stretches (helical) occupy residues 73–93 (AFIG…ALGI), 110–130 (FWAN…WASI), 138–158 (PPLY…AVAQ), 168–188 (VLQG…LADM), 200–220 (LMAI…ALFA), 227–247 (WIGW…FFFL), 267–287 (WIGM…LSWA), and 294–314 (GAWQ…IFAF). Residue N335 is glycosylated (N-linked (GlcNAc...) asparagine). 6 helical membrane-spanning segments follow: residues 338 to 358 (LVGG…LPLI), 367 to 391 (AILS…SMML), 398 to 419 (YVWI…LALF), 429 to 449 (LGLP…LLPM), 460 to 480 (GLAI…GLTI), and 541 to 561 (FQTI…TSLF).

This sequence belongs to the major facilitator superfamily.

It localises to the membrane. Its function is as follows. MFS-type transporter; part of the gene cluster that mediates the biosynthesis of sphingofungins, bioactive molecules acting as sphingolipid inhibitors via inhibiting serine palmitoyl transferase (SPT). The polypeptide is MFS-type transporter sphD (Aspergillus fumigatus (strain CBS 144.89 / FGSC A1163 / CEA10) (Neosartorya fumigata)).